A 374-amino-acid chain; its full sequence is Glutamate 5-kinase (374 aa).

Lysine 9 is a binding site for ATP. Substrate-binding residues include serine 49, aspartate 136, and asparagine 148. ATP-binding positions include 168–169 and 210–216; these read TD and TGGMRSK. A PUA domain is found at 276–354; that stretch reads SGTITVDSGA…EEARQYSYLH (79 aa).

The protein belongs to the glutamate 5-kinase family.

It localises to the cytoplasm. It catalyses the reaction L-glutamate + ATP = L-glutamyl 5-phosphate + ADP. Its pathway is amino-acid biosynthesis; L-proline biosynthesis; L-glutamate 5-semialdehyde from L-glutamate: step 1/2. In terms of biological role, catalyzes the transfer of a phosphate group to glutamate to form L-glutamate 5-phosphate. The sequence is that of Glutamate 5-kinase from Geobacillus thermodenitrificans (strain NG80-2).